Reading from the N-terminus, the 611-residue chain is Protein ral2 (611 aa).

Kelch repeat units lie at residues 43–91, 96–149, and 175–224; these read EAFV…HSGD, KLIF…EVNG, and YLII…VINK. A Phosphoserine modification is found at Ser-604.

Essential for mating and for recognition of the mating pheromone, and for the determination of cell shape. Implicated in activation of the ras1 protein. This Schizosaccharomyces pombe (strain 972 / ATCC 24843) (Fission yeast) protein is Protein ral2 (ral2).